The chain runs to 597 residues: Alpha-1,2-mannosyltransferase MNN2 (597 aa).

The Cytoplasmic segment spans residues 1-6; it reads MIAKQK. Residues 7–27 form a helical membrane-spanning segment; the sequence is IKILIGVIIVIATYHFIVSSN. Topologically, residues 28–597 are extracellular; the sequence is VRSKDLSDLV…ETAEIPTVVS (570 aa). The segment at 39-89 is disordered; that stretch reads LGSSDKSTTENERPKNNIVTNNRLDNPPNEDIPHAEPDSPPQEPPKSGNKP. N-linked (GlcNAc...) asparagine glycosylation occurs at Asn-382.

The protein belongs to the MNN1/MNT family. The cofactor is Mn(2+).

The protein localises to the golgi apparatus membrane. Its pathway is protein modification; protein glycosylation. With respect to regulation, enzyme activity is regulated by iron. In terms of biological role, alpha-1,2-mannosyltransferase required for cell wall integrity. Responsible for addition of the first alpha-1,2-linked mannose to form the branches on the mannan backbone of oligosaccharides. Addition of alpha-1,2-mannose is required for stabilization of the alpha-1,6-mannose backbone and hence regulates mannan fibril length; and is important for both immune recognition and virulence. Promotes iron uptake and usage along the endocytosis pathway under iron-limiting conditions. The protein is Alpha-1,2-mannosyltransferase MNN2 (MNN2) of Candida albicans (strain SC5314 / ATCC MYA-2876) (Yeast).